The following is a 778-amino-acid chain: Arf-GAP with coiled-coil, ANK repeat and PH domain-containing protein 2 (778 aa).

One can recognise a BAR domain in the interval 1–226 (MKMTVDFEEC…MKDLGAQLDR (226 aa)). Residues 266–361 (GIVMEGYLFK…WIKAVQTSIA (96 aa)) form the PH domain. The segment at 371–391 (SEKLDKKSSPSTGSLDSGNES) is disordered. A compositionally biased stretch (polar residues) spans 379–388 (SPSTGSLDSG). 2 positions are modified to phosphoserine: S384 and S387. An Arf-GAP domain is found at 399-520 (ESALQRVQCI…KFVDKYSISL (122 aa)). The segment at 414-437 (CCDCGLADPRWASINLGITLCIEC) adopts a C4-type zinc-finger fold. S521 carries the post-translational modification Phosphoserine. The disordered stretch occupies residues 540–599 (SISKFGPGDQVRASAQSSVRSNDSGIQQSSDDGRESLPSTVSANSLYEPEGERQDSSMFL). Over residues 552–569 (ASAQSSVRSNDSGIQQSS) the composition is skewed to polar residues. A phosphoserine mark is found at S581 and S584. ANK repeat units lie at residues 640–669 (NKAT…NVNQ), 673–702 (QGRG…NQHA), and 706–735 (EGKD…NEEM). The residue at position 742 (Y742) is a Phosphotyrosine. S775 carries the post-translational modification Phosphoserine.

In terms of assembly, interacts (via KANK domains) with RAB35 (GTP-bound form); the interaction is direct and probably recruits ACAP2 to membranes including plasma membrane. Interacts with MICALL1; the interaction is indirect through RAB35. Widely expressed. Highest level in lung.

It localises to the cell membrane. The protein localises to the endosome membrane. With respect to regulation, GAP activity stimulated by phosphatidylinositol 4,5-bisphosphate (PIP2) and phosphatidic acid. GTPase-activating protein (GAP) for ADP ribosylation factor 6 (ARF6). Doesn't show GAP activity for RAB35. This is Arf-GAP with coiled-coil, ANK repeat and PH domain-containing protein 2 (ACAP2) from Homo sapiens (Human).